A 308-amino-acid chain; its full sequence is Cap-specific mRNA (nucleoside-2'-O-)-methyltransferase (308 aa).

Residue Tyr-30 coordinates mRNA. Positions 46, 74, 76, 80, 103, 105, 124, and 147 each coordinate S-adenosyl-L-methionine. Residues 177 to 257 (PIASSLKWRC…NTKIRPKIVL (81 aa)) form a binding to NPH-I region. Catalysis depends on Lys-183, which acts as the For methyltransferase activity. MRNA-binding positions include 185 to 188 (RCPF), Asp-190, 213 to 215 (SAE), and Glu-241.

It belongs to the class I-like SAM-binding methyltransferase superfamily. Poxvirus/kinetoplastid 2'-O-MTase family. In terms of assembly, interacts with poly(A) polymerase catalytic subunit OPG063. Interacts with OPG109 and OPG123; these interactions might help linking transcription to capping and polyadenylation.

Its subcellular location is the virion. The catalysed reaction is a 5'-end (N(7)-methyl 5'-triphosphoguanosine)-ribonucleoside in mRNA + S-adenosyl-L-methionine = a 5'-end (N(7)-methyl 5'-triphosphoguanosine)-(2'-O-methyl-ribonucleoside) in mRNA + S-adenosyl-L-homocysteine + H(+). Displays methyltransferase, positive regulation of the poly(A) polymerase and transcription elongation activities. Involved in the modification of both mRNA ends and in intermediate and late gene positive transcription elongation. At the mRNAs 5' end, methylates the ribose 2' OH group of the first transcribed nucleotide, thereby producing a 2'-O-methylpurine cap. At the 3' end, functions as a processivity factor which stimulates the activity of the viral poly(A) polymerase OPG063 that creates mRNA's poly(A) tail. In the presence of OPG102, OPG063 does not dissociate from the RNA allowing tail elongation to around 250 adenylates. The polypeptide is Cap-specific mRNA (nucleoside-2'-O-)-methyltransferase (OPG102) (Fowlpox virus (strain NVSL) (FPV)).